We begin with the raw amino-acid sequence, 251 residues long: Protein CMS1 (251 aa).

Residues 1-37 are disordered; that stretch reads MSLDNDINTKKRKLQDDEKPRKKRKHKRPTRDDDADL.

The protein belongs to the CMS1 family.

The protein resides in the nucleus. In terms of biological role, may play a role in the regulation of DNA replication and cell cycle control. The polypeptide is Protein CMS1 (CSM1) (Chaetomium thermophilum (strain DSM 1495 / CBS 144.50 / IMI 039719) (Thermochaetoides thermophila)).